Consider the following 229-residue polypeptide: Adenylate kinase (229 aa).

Residue 10–15 (GSGKGT) participates in ATP binding. An NMP region spans residues 30 to 59 (ESGVIFREHISKGTELGKQAKSYIDKGELV). AMP contacts are provided by residues serine 31, arginine 36, 57–59 (ELV), 84–87 (GFPR), and glutamine 91. Residues 125 to 164 (GRRICKTNNNHPNNVSIDSIKPDGNNCRVCHGELIVRTDD) are LID. ATP is bound at residue arginine 126. 2 residues coordinate AMP: arginine 161 and arginine 173. Asparagine 209 lines the ATP pocket.

The protein belongs to the adenylate kinase family. In terms of assembly, monomer.

Its subcellular location is the cytoplasm. It catalyses the reaction AMP + ATP = 2 ADP. Its pathway is purine metabolism; AMP biosynthesis via salvage pathway; AMP from ADP: step 1/1. Functionally, catalyzes the reversible transfer of the terminal phosphate group between ATP and AMP. Plays an important role in cellular energy homeostasis and in adenine nucleotide metabolism. The polypeptide is Adenylate kinase (Lawsonia intracellularis (strain PHE/MN1-00)).